Here is an 884-residue protein sequence, read N- to C-terminus: Valine--tRNA ligase (884 aa).

The 'HIGH' region motif lies at 47–57 (PNVTGALHIGH). Positions 525–529 (KMSKS) match the 'KMSKS' region motif. K528 lines the ATP pocket. A coiled-coil region spans residues 812–884 (AVDFEAELAR…QQRFRDAIGK (73 aa)).

The protein belongs to the class-I aminoacyl-tRNA synthetase family. ValS type 1 subfamily. As to quaternary structure, monomer.

It is found in the cytoplasm. The enzyme catalyses tRNA(Val) + L-valine + ATP = L-valyl-tRNA(Val) + AMP + diphosphate. Functionally, catalyzes the attachment of valine to tRNA(Val). As ValRS can inadvertently accommodate and process structurally similar amino acids such as threonine, to avoid such errors, it has a 'posttransfer' editing activity that hydrolyzes mischarged Thr-tRNA(Val) in a tRNA-dependent manner. This chain is Valine--tRNA ligase, found in Nitratidesulfovibrio vulgaris (strain ATCC 29579 / DSM 644 / CCUG 34227 / NCIMB 8303 / VKM B-1760 / Hildenborough) (Desulfovibrio vulgaris).